Here is a 477-residue protein sequence, read N- to C-terminus: Histidine--tRNA ligase (477 aa).

Belongs to the class-II aminoacyl-tRNA synthetase family. In terms of assembly, homodimer.

It localises to the cytoplasm. The enzyme catalyses tRNA(His) + L-histidine + ATP = L-histidyl-tRNA(His) + AMP + diphosphate + H(+). The polypeptide is Histidine--tRNA ligase (hisS) (Xanthomonas campestris pv. campestris (strain ATCC 33913 / DSM 3586 / NCPPB 528 / LMG 568 / P 25)).